The chain runs to 1205 residues: PAN2-PAN3 deadenylation complex catalytic subunit Pan2 (1205 aa).

WD repeat units follow at residues 153 to 193 (DESE…QKYA), 195 to 231 (ETPG…VEHE), 244 to 280 (VHGN…AITP), and 328 to 367 (PVGP…SFNP). A linker region spans residues 368 to 484 (YSRETEFALP…PTGREEEPLH (117 aa)). Residues 485-924 (TVSKKYRKVT…VPAILYYVKR (440 aa)) enclose the USP domain. The residue at position 784 (S784) is a Phosphoserine. Positions 975–1147 (VGLDAEFVTL…EDARTALQLY (173 aa)) constitute an Exonuclease domain. 4 residues coordinate a divalent metal cation: D978, E980, D1087, and D1139. The tract at residues 1179-1205 (WKVPEPESQSSPKSKAGLRPGALGWVG) is disordered. The segment covering 1184 to 1193 (PESQSSPKSK) has biased composition (low complexity). At S1189 the chain carries Phosphoserine.

This sequence belongs to the peptidase C19 family. PAN2 subfamily. In terms of assembly, forms a heterotrimer with an asymmetric homodimer of the regulatory subunit PAN3 to form the poly(A)-nuclease (PAN) deadenylation complex. Interacts with PAN3 isoform 1/Pan3L and isoform 3/Pan3S. Interacts with ZFP36. Requires a divalent metal cation as cofactor.

The protein localises to the cytoplasm. It is found in the P-body. It localises to the nucleus. The catalysed reaction is Exonucleolytic cleavage of poly(A) to 5'-AMP.. With respect to regulation, positively regulated by the regulatory subunit PAN3. Functionally, catalytic subunit of the poly(A)-nuclease (PAN) deadenylation complex, one of two cytoplasmic mRNA deadenylases involved in general and miRNA-mediated mRNA turnover. PAN specifically shortens poly(A) tails of RNA and the activity is stimulated by poly(A)-binding protein (PABP). PAN deadenylation is followed by rapid degradation of the shortened mRNA tails by the CCR4-NOT complex. Deadenylated mRNAs are then degraded by two alternative mechanisms, namely exosome-mediated 3'-5' exonucleolytic degradation, or deadenylation-dependent mRNA decaping and subsequent 5'-3' exonucleolytic degradation by XRN1. Also acts as an important regulator of the HIF1A-mediated hypoxic response. Required for HIF1A mRNA stability independent of poly(A) tail length regulation. The chain is PAN2-PAN3 deadenylation complex catalytic subunit Pan2 from Rattus norvegicus (Rat).